The primary structure comprises 620 residues: DNA mismatch repair protein MutL (620 aa).

The disordered stretch occupies residues 332–402; that stretch reads SELGLEAQPE…YRTPLRPATH (71 aa). A compositionally biased stretch (low complexity) spans 352–365; the sequence is SNSTNSNVSSTSYS. Residues 378-394 show a composition bias toward polar residues; that stretch reads PLTTTATSYNQGQSSYR.

This sequence belongs to the DNA mismatch repair MutL/HexB family.

Functionally, this protein is involved in the repair of mismatches in DNA. It is required for dam-dependent methyl-directed DNA mismatch repair. May act as a 'molecular matchmaker', a protein that promotes the formation of a stable complex between two or more DNA-binding proteins in an ATP-dependent manner without itself being part of a final effector complex. In Shewanella piezotolerans (strain WP3 / JCM 13877), this protein is DNA mismatch repair protein MutL.